Here is a 130-residue protein sequence, read N- to C-terminus: Large ribosomal subunit protein bL12 (130 aa).

Belongs to the bacterial ribosomal protein bL12 family. As to quaternary structure, homodimer. Part of the ribosomal stalk of the 50S ribosomal subunit. Forms a multimeric L10(L12)X complex, where L10 forms an elongated spine to which 2 to 4 L12 dimers bind in a sequential fashion. Binds GTP-bound translation factors.

In terms of biological role, forms part of the ribosomal stalk which helps the ribosome interact with GTP-bound translation factors. Is thus essential for accurate translation. The protein is Large ribosomal subunit protein bL12 of Mycolicibacterium vanbaalenii (strain DSM 7251 / JCM 13017 / BCRC 16820 / KCTC 9966 / NRRL B-24157 / PYR-1) (Mycobacterium vanbaalenii).